The following is a 183-amino-acid chain: Bifunctional protein PyrR (183 aa).

Positions 102-114 (VVLVDDVLFSGRT) match the PRPP-binding motif.

This sequence belongs to the purine/pyrimidine phosphoribosyltransferase family. PyrR subfamily.

It catalyses the reaction UMP + diphosphate = 5-phospho-alpha-D-ribose 1-diphosphate + uracil. Its function is as follows. Regulates the transcription of the pyrimidine nucleotide (pyr) operon in response to exogenous pyrimidines. Functionally, also displays a weak uracil phosphoribosyltransferase activity which is not physiologically significant. This chain is Bifunctional protein PyrR, found in Leifsonia xyli subsp. xyli (strain CTCB07).